The chain runs to 455 residues: Phosphoglycerate kinase, glycosomal (455 aa).

Residues valine 23, aspartate 24, phenylalanine 25, asparagine 26, arginine 39, serine 61, histidine 62, glycine 64, arginine 65, arginine 132, histidine 168, and arginine 169 each coordinate (2R)-3-phosphoglycerate. Residues glycine 214 and alanine 215 each contribute to the ADP site. A CDP-binding site is contributed by glycine 214. The AMP site is built by alanine 215 and lysine 216. Position 215 (alanine 215) interacts with ATP. Alanine 215 contacts Mg(2+). Lysine 216 is a binding site for (2R)-3-phosphoglycerate. Aspartate 219 provides a ligand contact to CDP. Position 219 (aspartate 219) interacts with Mg(2+). ADP is bound by residues lysine 220 and glycine 238. Lysine 220 contacts AMP. Lysine 220 contacts ATP. Position 238 (glycine 238) interacts with CDP. AMP-binding residues include alanine 239 and alanine 311. Residues alanine 239 and alanine 311 each coordinate ATP. 2 residues coordinate ADP: alanine 311 and asparagine 335. Residues glycine 336 and phenylalanine 341 each coordinate CDP. Phenylalanine 341, glutamate 342, aspartate 374, and threonine 375 together coordinate ADP. Residue glutamate 342 participates in AMP binding. Positions 342, 374, and 375 each coordinate ATP. Residue aspartate 374 participates in Mg(2+) binding. Residues 417-455 (DAKAPAAAAAAGGDCPCGSGCAAVPAAATATVSMVLASP) form a topogenic signal region.

The protein belongs to the phosphoglycerate kinase family. In terms of assembly, monomer. Mg(2+) serves as cofactor.

The protein localises to the glycosome. The catalysed reaction is (2R)-3-phosphoglycerate + ATP = (2R)-3-phospho-glyceroyl phosphate + ADP. The protein operates within carbohydrate degradation; glycolysis; pyruvate from D-glyceraldehyde 3-phosphate: step 2/5. This Crithidia fasciculata protein is Phosphoglycerate kinase, glycosomal (PGKC).